We begin with the raw amino-acid sequence, 211 residues long: Potassium-transporting ATPase KdpC subunit (211 aa).

A helical transmembrane segment spans residues 13 to 35; the sequence is VVTMVLTGLLYPLAVTGLAQLLF.

Belongs to the KdpC family. As to quaternary structure, the system is composed of three essential subunits: KdpA, KdpB and KdpC.

The protein localises to the cell inner membrane. Part of the high-affinity ATP-driven potassium transport (or Kdp) system, which catalyzes the hydrolysis of ATP coupled with the electrogenic transport of potassium into the cytoplasm. This subunit acts as a catalytic chaperone that increases the ATP-binding affinity of the ATP-hydrolyzing subunit KdpB by the formation of a transient KdpB/KdpC/ATP ternary complex. The sequence is that of Potassium-transporting ATPase KdpC subunit from Myxococcus xanthus (strain DK1622).